The sequence spans 263 residues: 3-deoxy-manno-octulosonate cytidylyltransferase 1 (263 aa).

This sequence belongs to the KdsB family.

Its subcellular location is the cytoplasm. It carries out the reaction 3-deoxy-alpha-D-manno-oct-2-ulosonate + CTP = CMP-3-deoxy-beta-D-manno-octulosonate + diphosphate. Its pathway is nucleotide-sugar biosynthesis; CMP-3-deoxy-D-manno-octulosonate biosynthesis; CMP-3-deoxy-D-manno-octulosonate from 3-deoxy-D-manno-octulosonate and CTP: step 1/1. It functions in the pathway bacterial outer membrane biogenesis; lipopolysaccharide biosynthesis. Activates KDO (a required 8-carbon sugar) for incorporation into bacterial lipopolysaccharide in Gram-negative bacteria. The polypeptide is 3-deoxy-manno-octulosonate cytidylyltransferase 1 (Burkholderia ambifaria (strain MC40-6)).